Here is a 180-residue protein sequence, read N- to C-terminus: Large ribosomal subunit protein uL10 (180 aa).

This sequence belongs to the universal ribosomal protein uL10 family. As to quaternary structure, part of the ribosomal stalk of the 50S ribosomal subunit. The N-terminus interacts with L11 and the large rRNA to form the base of the stalk. The C-terminus forms an elongated spine to which L12 dimers bind in a sequential fashion forming a multimeric L10(L12)X complex.

Its function is as follows. Forms part of the ribosomal stalk, playing a central role in the interaction of the ribosome with GTP-bound translation factors. The chain is Large ribosomal subunit protein uL10 from Thermosipho melanesiensis (strain DSM 12029 / CIP 104789 / BI429).